The sequence spans 642 residues: Palmitoyltransferase akr1 (642 aa).

ANK repeat units lie at residues 1 to 29 (MGSLFLAASQGELDTVKNLISSEKIDVNA), 33 to 62 (GGATALHWAALNQQIPICKFLLEHGADVNA), 67 to 96 (LQAAPIHWAAKRGSVKTVHYLVQHGADPLL), 100 to 129 (QGFNCLHLAVHAASPLLVVYLLHLDISVDL), 133 to 162 (QQHTPLMWASYHGNEPITNCLLRWGADVLA), and 166 to 196 (DKMTPLHWSIVGGNLKCMKLILKEGGIPCTA). The Cytoplasmic portion of the chain corresponds to 1-256 (MGSLFLAASQ…SKFQFSQKTF (256 aa)). Transmembrane regions (helical) follow at residues 257-277 (IIFCFLSSFIITGVFFFIMSI) and 278-298 (CPMVISLIIAPLWIYFTFKYI). The Cytoplasmic portion of the chain corresponds to 299-316 (TTCIHANIDIVHFYLETP). A helical membrane pass occupies residues 317 to 337 (FLAGIFSSIFFWVWCHSLLYI). Over 338-343 (VPKTLP) the chain is Lumenal. The chain crosses the membrane as a helical span at residues 344-364 (IKPLSSLLFVLISFTCIGLYV). Residues 365 to 444 (RTAFQNPGYV…NCVGARNHRT (80 aa)) are Cytoplasmic-facing. Positions 400–450 (HYCLKCFQVKPPRSYHCGACKRCINRYDHHCPWTGNCVGARNHRTFLLFVF) constitute a DHHC domain. Cysteine 430 serves as the catalytic S-palmitoyl cysteine intermediate. The chain crosses the membrane as a helical span at residues 445-465 (FLLFVFTLSTLIPIYFYVAFY). The Lumenal segment spans residues 466 to 496 (YLQNIPIQKKYESYRCLFISGTICQWSLKDM). Residues 497 to 517 (FVLVASLTLFVNWCWVVVLAF) traverse the membrane as a helical segment. Over 518 to 642 (TQICQVAHNV…GRQDEATRHV (125 aa)) the chain is Cytoplasmic.

The protein belongs to the DHHC palmitoyltransferase family. AKR/ZDHHC17 subfamily.

It localises to the early endosome membrane. Its subcellular location is the golgi apparatus membrane. It carries out the reaction L-cysteinyl-[protein] + hexadecanoyl-CoA = S-hexadecanoyl-L-cysteinyl-[protein] + CoA. Palmitoyltransferase specific for casein kinase 1. This chain is Palmitoyltransferase akr1 (akr1), found in Schizosaccharomyces pombe (strain 972 / ATCC 24843) (Fission yeast).